We begin with the raw amino-acid sequence, 144 residues long: Probable low molecular weight protein-tyrosine-phosphatase AmsI (144 aa).

Cys9 (nucleophile) is an active-site residue. The active site involves Arg15. Asp115 serves as the catalytic Proton donor.

It belongs to the low molecular weight phosphotyrosine protein phosphatase family.

It carries out the reaction O-phospho-L-tyrosyl-[protein] + H2O = L-tyrosyl-[protein] + phosphate. May function as a phosphatase required for amylovoran (an exopolysaccharide that functions as a virulence factor) production. The sequence is that of Probable low molecular weight protein-tyrosine-phosphatase AmsI (amsI) from Erwinia amylovora (Fire blight bacteria).